The primary structure comprises 777 residues: Cullin-3 (777 aa).

Residues 568-596 form a disordered region; sequence YPPPKASMSNEENGPGPSSSGESMKERKP. The segment covering 576 to 589 has biased composition (low complexity); that stretch reads SNEENGPGPSSSGE. The Cullin neddylation domain maps to 707-769; that stretch reads DRKLEVEAAI…REYLARDEHD (63 aa). Lys-721 is covalently cross-linked (Glycyl lysine isopeptide (Lys-Gly) (interchain with G-Cter in NEDD8)).

Belongs to the cullin family. In terms of assembly, probable component of multiple cullin-RING-based BCB (BTB-CUL3-BTB) E3 ubiquitin-protein ligase complexes formed by cul-3, rbx-1 and a variable BTB domain-containing protein acting as both, adapter to cullin and substrate recognition component. Interacts with bath-15, bath-40, bath-41, bath-42, C17F4.8, tag-303, D2045.8, F57C2.1, ZC239.15 and B0281.5. Interacts with mel-26 (via BTB domain). Interacts with dcn-1. In terms of processing, neddylated. Deneddylated via its interaction with the COP9 signalosome (CSN) complex.

Its subcellular location is the cytoplasm. The protein resides in the nucleus. It participates in protein modification; protein ubiquitination. Functionally, probable core component of multiple cullin-RING-based BCB (BTB-CUL3-BTB) E3 ubiquitin-protein ligase complexes which mediate the ubiquitination and subsequent proteasomal degradation of target proteins. Probably acts as a scaffold protein which may contribute to catalysis through positioning of the substrate and the ubiquitin-conjugating enzyme. Required to target mei-3/katanin for degradation at the meiosis to mitosis transition via its neddylation and deneddylation. Functions in ubiquitin-mediated degradation of CKIs to target cki-1 for degradation. Regulates microtubule stability in the early embryo. In body wall muscles, involved in the organization of myosin thick filaments, likely by regulating the degradation of microtubule severing protein mei-1 downstream of unc-89. Together with spop-1, may promote the ubiquitination and proteasomal degradation of target bromodomain-containing proteins such as bet-1. The sequence is that of Cullin-3 from Caenorhabditis elegans.